The following is a 307-amino-acid chain: Fructose-bisphosphate aldolase (307 aa).

Residue Ser-49 participates in D-glyceraldehyde 3-phosphate binding. Asp-82 (proton donor) is an active-site residue. Zn(2+)-binding residues include His-83, Asp-104, Glu-134, and His-180. Gly-181 contacts dihydroxyacetone phosphate. His-210 contacts Zn(2+). Residues 211–213 (GAS) and 253–256 (NTDT) contribute to the dihydroxyacetone phosphate site.

The protein belongs to the class II fructose-bisphosphate aldolase family. In terms of assembly, homodimer. Requires Zn(2+) as cofactor.

The enzyme catalyses beta-D-fructose 1,6-bisphosphate = D-glyceraldehyde 3-phosphate + dihydroxyacetone phosphate. It participates in carbohydrate degradation; glycolysis; D-glyceraldehyde 3-phosphate and glycerone phosphate from D-glucose: step 4/4. Its function is as follows. Catalyzes the aldol condensation of dihydroxyacetone phosphate (DHAP or glycerone-phosphate) with glyceraldehyde 3-phosphate (G3P) to form fructose 1,6-bisphosphate (FBP) in gluconeogenesis and the reverse reaction in glycolysis. This chain is Fructose-bisphosphate aldolase (fba), found in Helicobacter pylori (strain ATCC 700392 / 26695) (Campylobacter pylori).